The chain runs to 310 residues: Quinolinate synthase 2 (310 aa).

Residues histidine 30 and serine 47 each coordinate iminosuccinate. Position 92 (cysteine 92) interacts with [4Fe-4S] cluster. Residues 118 to 120 and serine 135 contribute to the iminosuccinate site; that span reads YVN. Cysteine 177 is a [4Fe-4S] cluster binding site. Iminosuccinate-binding positions include 203-205 and threonine 220; that span reads HPE. Cysteine 265 lines the [4Fe-4S] cluster pocket.

This sequence belongs to the quinolinate synthase family. Type 2 subfamily. [4Fe-4S] cluster serves as cofactor.

The protein localises to the cytoplasm. The catalysed reaction is iminosuccinate + dihydroxyacetone phosphate = quinolinate + phosphate + 2 H2O + H(+). The protein operates within cofactor biosynthesis; NAD(+) biosynthesis; quinolinate from iminoaspartate: step 1/1. Catalyzes the condensation of iminoaspartate with dihydroxyacetone phosphate to form quinolinate. The chain is Quinolinate synthase 2 from Methanosarcina acetivorans (strain ATCC 35395 / DSM 2834 / JCM 12185 / C2A).